The following is a 364-amino-acid chain: DNA replication and repair protein RecF (364 aa).

30–37 (GENGSGKT) is an ATP binding site.

Belongs to the RecF family.

It is found in the cytoplasm. Functionally, the RecF protein is involved in DNA metabolism; it is required for DNA replication and normal SOS inducibility. RecF binds preferentially to single-stranded, linear DNA. It also seems to bind ATP. The sequence is that of DNA replication and repair protein RecF from Pseudoalteromonas translucida (strain TAC 125).